A 337-amino-acid polypeptide reads, in one-letter code: 15-cis-phytoene synthase (337 aa).

It belongs to the phytoene/squalene synthase family. Requires ATP as cofactor. Mn(2+) serves as cofactor. Mg(2+) is required as a cofactor.

The enzyme catalyses 2 (2E,6E,10E)-geranylgeranyl diphosphate = 15-cis-phytoene + 2 diphosphate. Its pathway is carotenoid biosynthesis; phytoene biosynthesis. Involved in the biosynthesis of carotenoids. Catalyzes the condensation of two molecules of geranylgeranyl diphosphate (GGPP) to give prephytoene diphosphate (PPPP) and the subsequent rearrangement of the cyclopropylcarbinyl intermediate to yield 15-cis-phytoene. The sequence is that of 15-cis-phytoene synthase (crtB) from Synechocystis sp. (strain ATCC 27184 / PCC 6803 / Kazusa).